A 235-amino-acid polypeptide reads, in one-letter code: Putative N-acetylmannosamine-6-phosphate 2-epimerase (235 aa).

It belongs to the NanE family.

The catalysed reaction is an N-acyl-D-glucosamine 6-phosphate = an N-acyl-D-mannosamine 6-phosphate. It participates in amino-sugar metabolism; N-acetylneuraminate degradation; D-fructose 6-phosphate from N-acetylneuraminate: step 3/5. Its function is as follows. Converts N-acetylmannosamine-6-phosphate (ManNAc-6-P) to N-acetylglucosamine-6-phosphate (GlcNAc-6-P). This is Putative N-acetylmannosamine-6-phosphate 2-epimerase from Photobacterium profundum (strain SS9).